The chain runs to 391 residues: Succinate--CoA ligase [ADP-forming] subunit beta (391 aa).

The ATP-grasp domain occupies 9–237 (RDLFEKHGVP…RATTDPLELR (229 aa)). Residues Lys46, 53–55 (GRG), Ala95, and Glu100 contribute to the ATP site. The Mg(2+) site is built by Asn192 and Asp206. Substrate is bound by residues Asn257 and 320–322 (GIT).

Belongs to the succinate/malate CoA ligase beta subunit family. In terms of assembly, heterotetramer of two alpha and two beta subunits. The cofactor is Mg(2+).

It carries out the reaction succinate + ATP + CoA = succinyl-CoA + ADP + phosphate. It catalyses the reaction GTP + succinate + CoA = succinyl-CoA + GDP + phosphate. Its pathway is carbohydrate metabolism; tricarboxylic acid cycle; succinate from succinyl-CoA (ligase route): step 1/1. Its function is as follows. Succinyl-CoA synthetase functions in the citric acid cycle (TCA), coupling the hydrolysis of succinyl-CoA to the synthesis of either ATP or GTP and thus represents the only step of substrate-level phosphorylation in the TCA. The beta subunit provides nucleotide specificity of the enzyme and binds the substrate succinate, while the binding sites for coenzyme A and phosphate are found in the alpha subunit. The sequence is that of Succinate--CoA ligase [ADP-forming] subunit beta from Cutibacterium acnes (strain DSM 16379 / KPA171202) (Propionibacterium acnes).